A 304-amino-acid polypeptide reads, in one-letter code: GTPase Era (304 aa).

The Era-type G domain occupies H9 to E177. A G1 region spans residues G17–S24. G17–S24 is a binding site for GTP. The tract at residues Q43 to N47 is G2. The G3 stretch occupies residues D64–G67. GTP is bound by residues D64 to I68 and N127 to D130. A G4 region spans residues N127–D130. The segment at I156–A158 is G5. The KH type-2 domain occupies T208–E285.

This sequence belongs to the TRAFAC class TrmE-Era-EngA-EngB-Septin-like GTPase superfamily. Era GTPase family. Monomer.

The protein resides in the cytoplasm. Its subcellular location is the cell membrane. In terms of biological role, an essential GTPase that binds both GDP and GTP, with rapid nucleotide exchange. Plays a role in 16S rRNA processing and 30S ribosomal subunit biogenesis and possibly also in cell cycle regulation and energy metabolism. The chain is GTPase Era from Pediococcus pentosaceus (strain ATCC 25745 / CCUG 21536 / LMG 10740 / 183-1w).